We begin with the raw amino-acid sequence, 559 residues long: Potassium-transporting ATPase potassium-binding subunit (559 aa).

13 helical membrane passes run 5 to 25, 27 to 47, 63 to 83, 132 to 152, 170 to 190, 253 to 273, 283 to 303, 327 to 347, 356 to 376, 379 to 399, 416 to 436, 484 to 504, and 524 to 544; these read GFLLIASFLLILLVLAKPLGS, LARLIAAVPLPGVAGVERILW, LLALLTLNLLGLGILFCLLFW, GLTVQNFLSAATGIAVVFALI, LVRITLWILFPVALIIALFFI, LAQMLAIFLIPAALCFAFGEA, LLWAMSFIFVVCVAVVMWAEV, FGVLASSLFAVVTTAASCGAV, ALGGMVPMWLMQIGEVVFGGV, GLYGMLLFVLLAVFIAGLMIG, MTALAILVTPMLVLLGSALAM, LLAFCMFVGRFGVIIPVMAIA, and GALFIGLLIGTVLLVGALTFI.

This sequence belongs to the KdpA family. As to quaternary structure, the system is composed of three essential subunits: KdpA, KdpB and KdpC.

It is found in the cell inner membrane. Functionally, part of the high-affinity ATP-driven potassium transport (or Kdp) system, which catalyzes the hydrolysis of ATP coupled with the electrogenic transport of potassium into the cytoplasm. This subunit binds the periplasmic potassium ions and delivers the ions to the membrane domain of KdpB through an intramembrane tunnel. In Salmonella dublin (strain CT_02021853), this protein is Potassium-transporting ATPase potassium-binding subunit.